Reading from the N-terminus, the 142-residue chain is MVLSAADKGNVKAAWGKVGGHAAEYGAEALERMFLSFPTTKTYFPHFDLSHGSAQVKGHGAKVAAALTKAVEHLDDLPGALSELSDLHAHKLRVDPVNFKLLSHSLLVTLASHLPSDFTPAVHASLDKFLANVSTVLTSKYR.

A Globin domain is found at 2–142 (VLSAADKGNV…VSTVLTSKYR (141 aa)). The residue at position 4 (S4) is a Phosphoserine. N6-succinyllysine is present on residues K8 and K12. N6-acetyllysine; alternate is present on K17. K17 is modified (N6-succinyllysine; alternate). Y25 carries the phosphotyrosine modification. S36 is subject to Phosphoserine. An N6-succinyllysine modification is found at K41. A Phosphoserine modification is found at S50. Residue H59 participates in O2 binding. H88 provides a ligand contact to heme b. S103 bears the Phosphoserine mark. T109 carries the phosphothreonine modification. At S125 the chain carries Phosphoserine. Phosphothreonine occurs at positions 135 and 138. S139 carries the phosphoserine modification.

The protein belongs to the globin family. Heterotetramer of two alpha chains and two beta chains. As to expression, red blood cells.

Involved in oxygen transport from the lung to the various peripheral tissues. Its function is as follows. Hemopressin acts as an antagonist peptide of the cannabinoid receptor CNR1. Hemopressin-binding efficiently blocks cannabinoid receptor CNR1 and subsequent signaling. The protein is Hemoglobin subunit alpha (HBA) of Bos taurus (Bovine).